The primary structure comprises 558 residues: Urocanate hydratase (558 aa).

NAD(+) is bound by residues 50–51, glutamine 128, 174–176, glutamate 194, arginine 199, 240–241, 261–265, 271–272, and tyrosine 320; these read GG, GMG, NA, QTSAH, and YI. Residue cysteine 408 is part of the active site. An NAD(+)-binding site is contributed by glycine 490.

It belongs to the urocanase family. NAD(+) serves as cofactor.

The protein resides in the cytoplasm. The enzyme catalyses 4-imidazolone-5-propanoate = trans-urocanate + H2O. The protein operates within amino-acid degradation; L-histidine degradation into L-glutamate; N-formimidoyl-L-glutamate from L-histidine: step 2/3. Functionally, catalyzes the conversion of urocanate to 4-imidazolone-5-propionate. The chain is Urocanate hydratase from Deinococcus radiodurans (strain ATCC 13939 / DSM 20539 / JCM 16871 / CCUG 27074 / LMG 4051 / NBRC 15346 / NCIMB 9279 / VKM B-1422 / R1).